Here is a 505-residue protein sequence, read N- to C-terminus: MSLWLPSEATVYLPPVPVSKVVSTDEYVARTNIYYHAGTSRLLAVGHPYFPIKKPNNNKILVPKVSGLQYRVFRIHLPDPNKFGFPDTSFYNPDTQRLVWACVGVEVGRGQPLGVGISGHPLLNKLDDTENASAYAANAGVDNRECISMDYKQTQLCLIGCKPPIGEHWGKGSPCTNVAVNPGDCPPLELINTVIQDGDMVDTGFGAMDFTTLQANKSEVPLDICTSICKYPDYIKMVSEPYGDSLFFYLRREQMFVRHLFNRAGAVGENVPDDLYIKGSGSTANLASSNYFPTPSGSMVTSDAQIFNKPYWLQRAQGHNNGICWGNQLFVTVVDTTRSTNMSLCAAISTSETTYKNTNFKEYLRHGEEYDLQFIFQLCKITLTADVMTYIHSMNSTILEDWNFGLQPPPGGTLEDTYRFVTSQAIACQKHTPPAPKEDPLKKYTFWEVNLKEKFSADLDQFPLGRKFLLQAGLKAKPKFTLGKRKATPTTSSTSTTAKRKKRKL.

Positions 480–505 (FTLGKRKATPTTSSTSTTAKRKKRKL) are disordered. Low complexity predominate over residues 488-497 (TPTTSSTSTT).

Belongs to the papillomaviridae L1 protein family. In terms of assembly, self-assembles into homopentamers. The capsid has an icosahedral symmetry and consists of 72 capsomers, with each capsomer being a pentamer of L1. Interacts with the minor capsid protein L2; this interaction is necessary for viral genome encapsidation. Interacts with protein E2; this interaction enhances E2-dependent replication and transcription activation. Interacts with host KPNA2; this interaction mediates the nuclear localization of L1 capsomers. Interacts with host ITGA6. Interacts with host SDC1; this interaction promotes efficient infection of keratinocytes. ISGylated by host HERC5, this results in dominant-negative effect on virus infectivity.

Its subcellular location is the virion. It is found in the host nucleus. Functionally, forms an icosahedral capsid with a T=7 symmetry and a 50 nm diameter. The capsid is composed of 72 pentamers linked to each other by disulfide bonds and associated with L2 proteins. Binds to heparan sulfate proteoglycans on cell surface of basal layer keratinocytes to provide initial virion attachment. This binding mediates a conformational change in the virus capsid that facilitates efficient infection. The virion enters the host cell via endocytosis. During virus trafficking, L1 protein dissociates from the viral DNA and the genomic DNA is released to the host nucleus. The virion assembly takes place within the cell nucleus. Encapsulates the genomic DNA together with protein L2. The sequence is that of Major capsid protein L1 from Homo sapiens (Human).